The chain runs to 564 residues: MAHSKEVPSFRWTQSLRRGLSQFTQTVKSDVLKDAKLIADSIDFNQVAQVQRALRKTKRGEEDLNKLRDLNKEVDRLMSMRSVQRNTVFKAGDLGRVERMELASGLGNLKTKFRRAETGSQGVYMGNLSQSQLAKRSEILRTLGFQQQGTGGNGVVRVWDVKDPSKLNNQFGSVPALTIACMTVQGGETMNSVIQALTSLGLLYTVKYPNLSDLDRLTQEHDCLQIVTKDESSINISGYNFSLSAAVKAGASILDDGNMLETIRVTPDNFSSLIKSTIQVKRREGMFIDEKPGNRNPYENLLYKLCLSGDGWPYIGSRSQIIGRSWDNTSIDLTRKPVAGPRQPEKNGQNLRLANLTEIQEAVIREAVGKLDPTNTLWLDIEGPATDPVEMALFQPAGSKYIHCFRKPHDEKGFKNGSRHSHGILMKDIEDAMPGVLSYVIGLLPPDMVVTTQGSDDIRKLFDLHGRRDLKLVDVRLTSEQARQFDQQVWEKFGHLCKHHNGVVVSKKKRDKDAPFKLASSEPHCALLDCIMFQSVLDGKLYEEELTPLLPPSLLFLPKAAYAL.

Residues 54-236 (LRKTKRGEED…VTKDESSINI (183 aa)) form a binding site for the cap structure m7GTP region. Residues Asp380 and Glu382 each coordinate Mn(2+). Glu390, Cys497, His500, and Cys525 together coordinate Zn(2+). Residue Asp529 participates in Mn(2+) binding.

This sequence belongs to the arenaviridae nucleocapsid protein family. In terms of assembly, homomultimerizes to form the nucleocapsid. Binds to viral genomic RNA. Interacts with glycoprotein G2. Interacts with protein Z; this interaction probably directs the encapsidated genome to budding sites. Interacts with protein L; this interaction does not interfere with Z-L interaction. Interacts with host IKBKE (via Protein kinase domain); the interaction inhibits IKBKE kinase activity.

Its subcellular location is the virion. The protein localises to the host cytoplasm. Encapsidates the genome, protecting it from nucleases. The encapsidated genomic RNA is termed the nucleocapsid (NC). Serves as template for viral transcription and replication. The increased presence of protein N in host cell does not seem to trigger the switch from transcription to replication as observed in other negative strain RNA viruses. Through the interaction with host IKBKE, strongly inhibits the phosphorylation and nuclear translocation of host IRF3, a protein involved in interferon activation pathway, leading to the inhibition of interferon-beta and IRF3-dependent promoters activation. Also encodes a functional 3'-5' exoribonuclease that degrades preferentially dsRNA substrates and thereby participates in the suppression of interferon induction. The polypeptide is Nucleoprotein (Akodon azarae (Azara's grass mouse)).